We begin with the raw amino-acid sequence, 116 residues long: Venom nerve growth factor (116 aa).

3 disulfide bridges follow: Cys-14–Cys-78, Cys-56–Cys-106, and Cys-66–Cys-108. An a 1,2-diacyl-sn-glycerol-binding site is contributed by Lys-86.

This sequence belongs to the NGF-beta family. As to quaternary structure, homodimer; non-covalently linked. Interacts with NTRK1. Not glycosylated. Expressed by the venom gland.

The protein resides in the secreted. Functionally, nerve growth factor is important for the development and maintenance of the sympathetic and sensory nervous systems. It stimulates division and differentiation of sympathetic and embryonic sensory neurons as well as basal forebrain cholinergic neurons in the brain. Its relevance in the snake venom is not clear. However, it has been shown to inhibit metalloproteinase-dependent proteolysis of platelet glycoprotein Ib alpha, suggesting a metalloproteinase inhibition to prevent metalloprotease autodigestion and/or protection against prey proteases. Binds a lipid between the two protein chains in the homodimer. The lipid-bound form promotes histamine relase from mouse mast cells, contrary to the lipid-free form. This Naja atra (Chinese cobra) protein is Venom nerve growth factor.